A 119-amino-acid polypeptide reads, in one-letter code: Large ribosomal subunit protein uL14 (119 aa).

This sequence belongs to the universal ribosomal protein uL14 family. As to quaternary structure, part of the 50S ribosomal subunit. Forms a cluster with proteins L3 and L19. In the 70S ribosome, L14 and L19 interact and together make contacts with the 16S rRNA in bridges B5 and B8.

In terms of biological role, binds to 23S rRNA. Forms part of two intersubunit bridges in the 70S ribosome. The sequence is that of Large ribosomal subunit protein uL14 from Wolbachia pipientis wMel.